A 266-amino-acid chain; its full sequence is UPF0354 protein lwe1624 (266 aa).

This sequence belongs to the UPF0354 family.

The chain is UPF0354 protein lwe1624 from Listeria welshimeri serovar 6b (strain ATCC 35897 / DSM 20650 / CCUG 15529 / CIP 8149 / NCTC 11857 / SLCC 5334 / V8).